A 334-amino-acid chain; its full sequence is Ornithine carbamoyltransferase subunit F (334 aa).

Carbamoyl phosphate is bound by residues 56–59 (STRT), Q83, R107, and 134–137 (HPTQ). Residues N168, D232, and 236-237 (SM) each bind L-ornithine. Carbamoyl phosphate-binding positions include 274–275 (CL) and R320.

This sequence belongs to the aspartate/ornithine carbamoyltransferase superfamily. OTCase family. In terms of assembly, in E.coli strain K12, trimer of identical or non-identical chains are composed of ArgI (I) and/or ArgF (F). The trimer has the following composition: FFI, FFF, FII, III. E.coli strains B and W, which are known to contain only ArgI, produce only a trimer of identical chains (III).

It localises to the cytoplasm. It carries out the reaction carbamoyl phosphate + L-ornithine = L-citrulline + phosphate + H(+). It participates in amino-acid biosynthesis; L-arginine biosynthesis; L-arginine from L-ornithine and carbamoyl phosphate: step 1/3. Reversibly catalyzes the transfer of the carbamoyl group from carbamoyl phosphate (CP) to the N(epsilon) atom of ornithine (ORN) to produce L-citrulline, which is a substrate for argininosuccinate synthetase, the enzyme involved in the final step in arginine biosynthesis. This Escherichia coli (strain K12) protein is Ornithine carbamoyltransferase subunit F.